The sequence spans 706 residues: Integrator complex subunit 13 (706 aa).

The tract at residues 564-603 (PPEEEERKKRGRKREDKEDKSEKAVKDYEQEKSWQDSERL) is disordered. The stretch at 567–622 (EEERKKRGRKREDKEDKSEKAVKDYEQEKSWQDSERLKGILERGKEELAEAEIIKD) forms a coiled coil. Residues 572-582 (KRGRKREDKED) carry the Nuclear localization signal (NLS) motif. Residue Lys611 forms a Glycyl lysine isopeptide (Lys-Gly) (interchain with G-Cter in SUMO2) linkage. Residues 615-636 (AEAEIIKDSPDSPEPPNKKPLV) are compositionally biased toward basic and acidic residues. Residues 615–650 (AEAEIIKDSPDSPEPPNKKPLVEMDETPQVEKSKGP) are disordered. A phosphoserine mark is found at Ser623, Ser626, and Ser678. The segment at 649–694 (GPVSLLSLWSNRINTANSRKHQEFAGRLNSVNNRAELYQHLKEENG) is cleavage module binding motif (CMBM).

The protein belongs to the Integrator subunit 13 family. As to quaternary structure, component of the Integrator complex, composed of core subunits INTS1, INTS2, INTS3, INTS4, INTS5, INTS6, INTS7, INTS8, INTS9/RC74, INTS10, INTS11/CPSF3L, INTS12, INTS13, INTS14 and INTS15. The core complex associates with protein phosphatase 2A subunits PPP2CA and PPP2R1A, to form the Integrator-PP2A (INTAC) complex. INTS13 is part of the tail subcomplex, composed of INTS10, INTS13, INTS14 and INTS15. Interacts with transcription factors ZNF609 and ZNF655. Interacts with PAFAH1B1; this interaction may be required for proper recruitment of dynein complexes to the nuclear envelope at prophase. Widely expressed. Tends to be up-regulated in seminomas compared to normal testis.

It is found in the nucleus. It localises to the cytoplasm. Component of the integrator complex, a multiprotein complex that terminates RNA polymerase II (Pol II) transcription in the promoter-proximal region of genes. The integrator complex provides a quality checkpoint during transcription elongation by driving premature transcription termination of transcripts that are unfavorably configured for transcriptional elongation: the complex terminates transcription by (1) catalyzing dephosphorylation of the C-terminal domain (CTD) of Pol II subunit POLR2A/RPB1 and SUPT5H/SPT5, (2) degrading the exiting nascent RNA transcript via endonuclease activity and (3) promoting the release of Pol II from bound DNA. The integrator complex is also involved in terminating the synthesis of non-coding Pol II transcripts, such as enhancer RNAs (eRNAs), small nuclear RNAs (snRNAs), telomerase RNAs and long non-coding RNAs (lncRNAs). Within the integrator complex, INTS13 is part of the integrator tail module and acts as a platform for the recruitment of transcription factors at promoters. At prophase, mediates recruitment of cytoplasmic dynein to the nuclear envelope, a step important for proper centrosome-nucleus coupling. At G2/M phase, may be required for proper spindle formation and execution of cytokinesis. This is Integrator complex subunit 13 from Homo sapiens (Human).